Reading from the N-terminus, the 43-residue chain is Holotricin-1 (43 aa).

3 disulfide bridges follow: C3-C34, C20-C39, and C24-C41.

This sequence belongs to the invertebrate defensin family. Type 1 subfamily. As to expression, hemolymph.

It localises to the secreted. Functionally, shows potent antibacterial activity against Gram-positive bacteria. The polypeptide is Holotricin-1 (Holotrichia diomphalia (Korean black chafer)).